The following is a 156-amino-acid chain: Putative pre-16S rRNA nuclease (156 aa).

It belongs to the YqgF nuclease family.

The protein resides in the cytoplasm. Functionally, could be a nuclease involved in processing of the 5'-end of pre-16S rRNA. The polypeptide is Putative pre-16S rRNA nuclease (Bartonella tribocorum (strain CIP 105476 / IBS 506)).